Here is a 224-residue protein sequence, read N- to C-terminus: Homeobox protein Hox-B6 (224 aa).

The short motif at 127–132 (VYPWMQ) is the Antp-type hexapeptide element. The homeobox DNA-binding region spans 146–205 (GRRGRQTYTRYQTLELEKEFHYNRYLTRRRRIEIAHALCLTERQIKIWFQNRRMKWKKES). Position 214 is a phosphoserine (Ser-214).

It belongs to the Antp homeobox family.

It localises to the nucleus. Sequence-specific transcription factor which is part of a developmental regulatory system that provides cells with specific positional identities on the anterior-posterior axis. The sequence is that of Homeobox protein Hox-B6 (HOXB6) from Homo sapiens (Human).